Reading from the N-terminus, the 869-residue chain is Bifunctional uridylyltransferase/uridylyl-removing enzyme (869 aa).

The uridylyltransferase stretch occupies residues 1-331; that stretch reads MPTNLPALPM…FPSESQVTRV (331 aa). Positions 332–688 are uridylyl-removing; sequence INERFVERQG…ARISPAGEGL (357 aa). An HD domain is found at 450 to 572; the sequence is VDQHILMVVR…VGDERHLTAL (123 aa). ACT domains are found at residues 689–773 and 800–869; these read QVAV…PSQG and LLSL…ALEI.

It belongs to the GlnD family. The cofactor is Mg(2+).

It catalyses the reaction [protein-PII]-L-tyrosine + UTP = [protein-PII]-uridylyl-L-tyrosine + diphosphate. The enzyme catalyses [protein-PII]-uridylyl-L-tyrosine + H2O = [protein-PII]-L-tyrosine + UMP + H(+). Uridylyltransferase (UTase) activity is inhibited by glutamine, while glutamine activates uridylyl-removing (UR) activity. Functionally, modifies, by uridylylation and deuridylylation, the PII regulatory proteins (GlnB and homologs), in response to the nitrogen status of the cell that GlnD senses through the glutamine level. Under low glutamine levels, catalyzes the conversion of the PII proteins and UTP to PII-UMP and PPi, while under higher glutamine levels, GlnD hydrolyzes PII-UMP to PII and UMP (deuridylylation). Thus, controls uridylylation state and activity of the PII proteins, and plays an important role in the regulation of nitrogen assimilation and metabolism. The polypeptide is Bifunctional uridylyltransferase/uridylyl-removing enzyme (Cupriavidus pinatubonensis (strain JMP 134 / LMG 1197) (Cupriavidus necator (strain JMP 134))).